A 116-amino-acid polypeptide reads, in one-letter code: Small ribosomal subunit protein uS13m (116 aa).

This sequence belongs to the universal ribosomal protein uS13 family. As to quaternary structure, part of the small ribosomal subunit.

It is found in the mitochondrion. Its function is as follows. Located at the top of the head of the small subunit, it contacts several helices of the 18S rRNA. The polypeptide is Small ribosomal subunit protein uS13m (RPS13) (Daucus carota (Wild carrot)).